A 315-amino-acid chain; its full sequence is uncharacterized protein (315 aa).

Polar residues predominate over residues 1–23 (MSNTDALNTANTQITENVDTSSM). Positions 1–31 (MSNTDALNTANTQITENVDTSSMKVEKTHDS) are disordered.

This is an uncharacterized protein from Acanthamoeba polyphaga mimivirus (APMV).